The chain runs to 319 residues: Glycine--tRNA ligase alpha subunit (319 aa).

The protein belongs to the class-II aminoacyl-tRNA synthetase family. As to quaternary structure, tetramer of two alpha and two beta subunits.

It localises to the cytoplasm. It carries out the reaction tRNA(Gly) + glycine + ATP = glycyl-tRNA(Gly) + AMP + diphosphate. This is Glycine--tRNA ligase alpha subunit from Oenococcus oeni (strain ATCC BAA-331 / PSU-1).